The primary structure comprises 593 residues: Chaperone protein DnaK (593 aa).

A Phosphothreonine; by autocatalysis modification is found at Thr181.

Belongs to the heat shock protein 70 family.

Acts as a chaperone. This is Chaperone protein DnaK from Mycoplasmoides gallisepticum (strain R(low / passage 15 / clone 2)) (Mycoplasma gallisepticum).